The following is a 271-amino-acid chain: MTRQQLDVQVKNGGLVRVWYGVYAAQEPDLLGRLAALDVFMGGHAVACLGTAAALYGFDTENTVAIHMLDPGVRMRPTVGLMVHQRVGARLQRVSGRLATAPAWTAVEVARQLRRPRALATLDAALRSMRCARSEIENAVAEQRGRRGIVAARELLPFADGRAESAMESEARLVMIDHGLPLPELQYPIHGHGGEMWRVDFAWPDMRLAAEYESIEWHAGPAEMLRDKTRWAKLQELGWTIVPIVVDDVRREPGRLAARIARHLDRARMAG.

This is an uncharacterized protein from Mycobacterium tuberculosis (strain CDC 1551 / Oshkosh).